The sequence spans 251 residues: Small ribosomal subunit protein uS2 (251 aa).

Belongs to the universal ribosomal protein uS2 family.

The chain is Small ribosomal subunit protein uS2 from Aromatoleum aromaticum (strain DSM 19018 / LMG 30748 / EbN1) (Azoarcus sp. (strain EbN1)).